The following is a 131-amino-acid chain: Small ribosomal subunit protein bS6 (131 aa).

Residues 97-131 are disordered; the sequence is TEASPMAKARDERDSRRGPAGERSYDEAHAEEIAE. Residues 104 to 131 are compositionally biased toward basic and acidic residues; it reads KARDERDSRRGPAGERSYDEAHAEEIAE.

Belongs to the bacterial ribosomal protein bS6 family.

Its function is as follows. Binds together with bS18 to 16S ribosomal RNA. This Shewanella baltica (strain OS223) protein is Small ribosomal subunit protein bS6.